The sequence spans 126 residues: B3 domain-containing protein At5g54067 (126 aa).

The segment at residues 20–118 (SDIVGNVVLP…KFVVLNFQYS (99 aa)) is a DNA-binding region (TF-B3).

The protein localises to the nucleus. In Arabidopsis thaliana (Mouse-ear cress), this protein is B3 domain-containing protein At5g54067.